Here is a 245-residue protein sequence, read N- to C-terminus: Leucyl/phenylalanyl-tRNA--protein transferase (245 aa).

It belongs to the L/F-transferase family.

It localises to the cytoplasm. It carries out the reaction N-terminal L-lysyl-[protein] + L-leucyl-tRNA(Leu) = N-terminal L-leucyl-L-lysyl-[protein] + tRNA(Leu) + H(+). It catalyses the reaction N-terminal L-arginyl-[protein] + L-leucyl-tRNA(Leu) = N-terminal L-leucyl-L-arginyl-[protein] + tRNA(Leu) + H(+). The catalysed reaction is L-phenylalanyl-tRNA(Phe) + an N-terminal L-alpha-aminoacyl-[protein] = an N-terminal L-phenylalanyl-L-alpha-aminoacyl-[protein] + tRNA(Phe). Functionally, functions in the N-end rule pathway of protein degradation where it conjugates Leu, Phe and, less efficiently, Met from aminoacyl-tRNAs to the N-termini of proteins containing an N-terminal arginine or lysine. The polypeptide is Leucyl/phenylalanyl-tRNA--protein transferase (Paraburkholderia phytofirmans (strain DSM 17436 / LMG 22146 / PsJN) (Burkholderia phytofirmans)).